Here is a 360-residue protein sequence, read N- to C-terminus: Probable L-asparaginase 3 (360 aa).

A signal peptide spans 1–16 (MWSSIISFLFFSVALC). Asn27, Asn35, and Asn40 each carry an N-linked (GlcNAc...) asparagine glycan. Residues 39 to 359 (PNVTIFAMGG…QNITDIFSLE (321 aa)) form the Asparaginase/glutaminase domain. Thr49 acts as the O-isoaspartyl threonine intermediate in catalysis. Asn82 is a glycosylation site (N-linked (GlcNAc...) asparagine). Ser96 contacts substrate. Residue Asn106 is glycosylated (N-linked (GlcNAc...) asparagine). 129-130 (TD) provides a ligand contact to substrate. 5 N-linked (GlcNAc...) asparagine glycosylation sites follow: Asn144, Asn179, Asn246, Asn302, and Asn351.

It belongs to the asparaginase 1 family.

Its subcellular location is the secreted. The protein localises to the cell wall. The catalysed reaction is L-asparagine + H2O = L-aspartate + NH4(+). This chain is Probable L-asparaginase 3, found in Schizosaccharomyces pombe (strain 972 / ATCC 24843) (Fission yeast).